The chain runs to 318 residues: 4-hydroxy-3-methylbut-2-enyl diphosphate reductase (318 aa).

Cys12 serves as a coordination point for [4Fe-4S] cluster. (2E)-4-hydroxy-3-methylbut-2-enyl diphosphate-binding residues include His41 and His74. The dimethylallyl diphosphate site is built by His41 and His74. Residues His41 and His74 each coordinate isopentenyl diphosphate. Cys96 lines the [4Fe-4S] cluster pocket. His124 contributes to the (2E)-4-hydroxy-3-methylbut-2-enyl diphosphate binding site. His124 provides a ligand contact to dimethylallyl diphosphate. His124 is a binding site for isopentenyl diphosphate. The Proton donor role is filled by Glu126. Residue Thr168 coordinates (2E)-4-hydroxy-3-methylbut-2-enyl diphosphate. Cys198 contacts [4Fe-4S] cluster. 4 residues coordinate (2E)-4-hydroxy-3-methylbut-2-enyl diphosphate: Ser226, Ser227, Asn228, and Ser270. 4 residues coordinate dimethylallyl diphosphate: Ser226, Ser227, Asn228, and Ser270. Isopentenyl diphosphate contacts are provided by Ser226, Ser227, Asn228, and Ser270.

The protein belongs to the IspH family. [4Fe-4S] cluster serves as cofactor.

It catalyses the reaction isopentenyl diphosphate + 2 oxidized [2Fe-2S]-[ferredoxin] + H2O = (2E)-4-hydroxy-3-methylbut-2-enyl diphosphate + 2 reduced [2Fe-2S]-[ferredoxin] + 2 H(+). The catalysed reaction is dimethylallyl diphosphate + 2 oxidized [2Fe-2S]-[ferredoxin] + H2O = (2E)-4-hydroxy-3-methylbut-2-enyl diphosphate + 2 reduced [2Fe-2S]-[ferredoxin] + 2 H(+). It functions in the pathway isoprenoid biosynthesis; dimethylallyl diphosphate biosynthesis; dimethylallyl diphosphate from (2E)-4-hydroxy-3-methylbutenyl diphosphate: step 1/1. It participates in isoprenoid biosynthesis; isopentenyl diphosphate biosynthesis via DXP pathway; isopentenyl diphosphate from 1-deoxy-D-xylulose 5-phosphate: step 6/6. Functionally, catalyzes the conversion of 1-hydroxy-2-methyl-2-(E)-butenyl 4-diphosphate (HMBPP) into a mixture of isopentenyl diphosphate (IPP) and dimethylallyl diphosphate (DMAPP). Acts in the terminal step of the DOXP/MEP pathway for isoprenoid precursor biosynthesis. This is 4-hydroxy-3-methylbut-2-enyl diphosphate reductase from Psychrobacter sp. (strain PRwf-1).